A 96-amino-acid chain; its full sequence is Aspartyl/glutamyl-tRNA(Asn/Gln) amidotransferase subunit C (96 aa).

Belongs to the GatC family. As to quaternary structure, heterotrimer of A, B and C subunits.

The catalysed reaction is L-glutamyl-tRNA(Gln) + L-glutamine + ATP + H2O = L-glutaminyl-tRNA(Gln) + L-glutamate + ADP + phosphate + H(+). It catalyses the reaction L-aspartyl-tRNA(Asn) + L-glutamine + ATP + H2O = L-asparaginyl-tRNA(Asn) + L-glutamate + ADP + phosphate + 2 H(+). In terms of biological role, allows the formation of correctly charged Asn-tRNA(Asn) or Gln-tRNA(Gln) through the transamidation of misacylated Asp-tRNA(Asn) or Glu-tRNA(Gln) in organisms which lack either or both of asparaginyl-tRNA or glutaminyl-tRNA synthetases. The reaction takes place in the presence of glutamine and ATP through an activated phospho-Asp-tRNA(Asn) or phospho-Glu-tRNA(Gln). The chain is Aspartyl/glutamyl-tRNA(Asn/Gln) amidotransferase subunit C from Bacillus cytotoxicus (strain DSM 22905 / CIP 110041 / 391-98 / NVH 391-98).